The following is an 823-amino-acid chain: MNPTAQRIHELTDLLNRYAYEYYTLDAPSIPDAEYDRLFRELEALERNHPELKLPDSPTQRVGGEPLAGFAEVRHEVPMLSLTNAFSPQDENGVFDHAEMYAFDQRVRDGLDGGNPEYVIEPKFDGLAISLLYRDGVLVQAATRGDGTTGEDVTRNVKTVSNIPLRLHGENVPELIEVRGEVLMLKADFAGLNKRQAENGQKPFANPRNAAAGSLRQLDSRITAQRKLHFFPYSIARQQGGFEAEEHIQELAYFQELGFSLPNGNFGCFKNIGEVLAFYEHMQQKRPELPYEIDGMVVKVNSLAQQRELGFISRAPRWAVAHKFPAEEALTIVEAIDVQIGRTGAVTPVARLQPVFVGGVTVTNATLHNQDEVSRKDVRVGDTVVVRRAGDVIPEVVRVIFERRPMQETAVAVSDGIGHQQDDLFAETPSAKQTESVPLHKPYRLPARCPICRSEIEREEGEAVARCSGGMLCQAQRAQGLIHFASRKAMDIDGLGEKQIEQLVAQDLVRHFADLYRIDIPTLQKMKETADKGSSENENGDAETVSGDLSKYNTQNGKKQPTKWAQNILAGIESGKTPELARFLFALGIRHVGERTAKTLAQAFGTLERVRRAPEPVLACLPDIGTVVARSIAHFFAQAEQQAMIDELLAAGVAPQAQAVSLPAAQYAGPQRWITRLPGFKISENKAQALWELAGQSIEGLQNDKALPADWQAWRSKAQNTALLENLKTFFAQMPSEDEAAQGSDGINKAVAGKTFVLTGTLPTFKRDQAQALIEAAGGKVSGSVSKKTDYVVAGEAAGSKLEKANALGVSVLSEAELLTLLC.

NAD(+)-binding positions include 32–36, 81–82, and E121; these read DAEYD and SL. K123 serves as the catalytic N6-AMP-lysine intermediate. NAD(+) contacts are provided by R144, E181, K299, and K323. C449, C452, C467, and C473 together coordinate Zn(2+). Residues 528–558 are disordered; the sequence is ETADKGSSENENGDAETVSGDLSKYNTQNGK. The region spanning 746–823 is the BRCT domain; that stretch reads GINKAVAGKT…SEAELLTLLC (78 aa).

It belongs to the NAD-dependent DNA ligase family. LigA subfamily. The cofactor is Mg(2+). Requires Mn(2+) as cofactor.

It carries out the reaction NAD(+) + (deoxyribonucleotide)n-3'-hydroxyl + 5'-phospho-(deoxyribonucleotide)m = (deoxyribonucleotide)n+m + AMP + beta-nicotinamide D-nucleotide.. In terms of biological role, DNA ligase that catalyzes the formation of phosphodiester linkages between 5'-phosphoryl and 3'-hydroxyl groups in double-stranded DNA using NAD as a coenzyme and as the energy source for the reaction. It is essential for DNA replication and repair of damaged DNA. This Neisseria gonorrhoeae (strain NCCP11945) protein is DNA ligase.